Here is a 170-residue protein sequence, read N- to C-terminus: MESHLNEQQISDFRDAFSLFDKNNDGCISREELATVLTRLGMAPSQEDLQDMIVAVDEDGNGTIEFDEFLAIMKKKLYENDKGDDEEELRKAFRIFDKDDNGFISRNELSMVMASLGEEMTEDEIDDMMKAADSNNDGQVDYEEFKRVMMSTWNITEIFKPHVTIWRYKP.

EF-hand domains lie at Gln-8 to Ala-43, Pro-44 to Glu-79, Asp-84 to Glu-119, and Met-120 to Ile-155. Residues Asp-21, Asn-23, Asp-25, Cys-27, Glu-32, Asp-57, Asp-59, Asn-61, Thr-63, Glu-68, Asp-97, Asp-99, Asn-101, Glu-108, Asp-133, Asn-135, Asp-137, Gln-139, and Glu-144 each coordinate Ca(2+).

It belongs to the calmodulin family.

In terms of biological role, potential calcium sensor. The polypeptide is Putative calmodulin-like protein 6 (CML6) (Oryza sativa subsp. japonica (Rice)).